We begin with the raw amino-acid sequence, 108 residues long: Ferredoxin, plant-type (108 aa).

In terms of domain architecture, 2Fe-2S ferredoxin-type spans 5–96 (FEITVQPGGE…DLCIERYSKP (92 aa)). Positions 40, 45, 48, and 80 each coordinate [2Fe-2S] cluster.

This sequence belongs to the 2Fe2S plant-type ferredoxin family.

The protein operates within aromatic compound metabolism; catechol degradation. Functionally, ferredoxins are iron-sulfur proteins that transfer electrons in a wide variety of metabolic reactions. This chain is Ferredoxin, plant-type (nahT), found in Pseudomonas putida (Arthrobacter siderocapsulatus).